A 384-amino-acid chain; its full sequence is Chaperone protein DnaJ 1 (384 aa).

Residues 4–68 (DYYGLLGVAR…EKRRIVDMGG (65 aa)) enclose the J domain. The CR-type zinc finger occupies 133–215 (GVTKHLTVDT…CGGDGRVRAR (83 aa)). Cysteine 146, cysteine 149, cysteine 163, cysteine 166, cysteine 189, cysteine 192, cysteine 203, and cysteine 206 together coordinate Zn(2+). CXXCXGXG motif repeat units lie at residues 146–153 (CDACHGSG), 163–170 (CETCGGAG), 189–196 (CPTCRGAG), and 203–210 (CHKCGGDG).

This sequence belongs to the DnaJ family. Homodimer. Zn(2+) is required as a cofactor.

The protein localises to the cytoplasm. Functionally, participates actively in the response to hyperosmotic and heat shock by preventing the aggregation of stress-denatured proteins and by disaggregating proteins, also in an autonomous, DnaK-independent fashion. Unfolded proteins bind initially to DnaJ; upon interaction with the DnaJ-bound protein, DnaK hydrolyzes its bound ATP, resulting in the formation of a stable complex. GrpE releases ADP from DnaK; ATP binding to DnaK triggers the release of the substrate protein, thus completing the reaction cycle. Several rounds of ATP-dependent interactions between DnaJ, DnaK and GrpE are required for fully efficient folding. Also involved, together with DnaK and GrpE, in the DNA replication of plasmids through activation of initiation proteins. The polypeptide is Chaperone protein DnaJ 1 (Nocardia farcinica (strain IFM 10152)).